The sequence spans 70 residues: Large ribosomal subunit protein bL31 (70 aa).

Zn(2+) contacts are provided by Cys17, Cys19, Cys37, and Cys40.

The protein belongs to the bacterial ribosomal protein bL31 family. Type A subfamily. In terms of assembly, part of the 50S ribosomal subunit. Zn(2+) is required as a cofactor.

In terms of biological role, binds the 23S rRNA. This is Large ribosomal subunit protein bL31 from Clostridium acetobutylicum (strain ATCC 824 / DSM 792 / JCM 1419 / IAM 19013 / LMG 5710 / NBRC 13948 / NRRL B-527 / VKM B-1787 / 2291 / W).